The sequence spans 278 residues: MAIRKYKPTTPGRRGSSVSDFAEITRSTPEKSLVRPLHGRGGRNAHGRITTRHKGGGHKRAYRLIDFRRNDKDGIPAKVAHIEYDPNRTANIALLHYADGEKRYIIAPKGLVQGSPVESGAGADIKPGNNLPLRNIPTGTTIHGVELRPGGGAKMARSAGASIQLLGKEGSYATLRMPSGEIRRVDVRCRASVGEVGNAEQSNINWGKAGRMRWKGKRPTVRGVVMNPVDHPHGGGEGKTSGGRHPVSPWGKPEGRTRKNKASDKMIVRRRRTGKNKR.

Disordered regions lie at residues 1 to 58 (MAIR…GGGH) and 225 to 278 (VMNP…KNKR). Residues 37–58 (LHGRGGRNAHGRITTRHKGGGH) are compositionally biased toward basic residues. Basic and acidic residues predominate over residues 253 to 267 (PEGRTRKNKASDKMI). The segment covering 268–278 (VRRRRTGKNKR) has biased composition (basic residues).

The protein belongs to the universal ribosomal protein uL2 family. Part of the 50S ribosomal subunit. Forms a bridge to the 30S subunit in the 70S ribosome.

One of the primary rRNA binding proteins. Required for association of the 30S and 50S subunits to form the 70S ribosome, for tRNA binding and peptide bond formation. It has been suggested to have peptidyltransferase activity; this is somewhat controversial. Makes several contacts with the 16S rRNA in the 70S ribosome. This is Large ribosomal subunit protein uL2 from Rhodococcus erythropolis (strain PR4 / NBRC 100887).